Reading from the N-terminus, the 473-residue chain is MKTLYSLRRFYPVETLFNGTLALAGRDQETTGFAWWAGNARLINLSGKLLGAHVAHAGLIVFWAGAMNLFEVAHFVPEKPMYEQGLILLPHLATLGWGVGPGGEVIDTFPYFVSGVLHLISSAVLGFGGIYHALLGPETLEESFPFFGYVWKDRNKMTTILGIHLILLGIGAFLLVLKALYFGGVYDTWAPGGGDVRKITNLTLSPSVIFGYLLKSPFGGEGWIVSVDDLEDIIGGHVWLGSICILGGIWHILTKPFAWARRAFVWSGEAYLSYSLGALSVFGFIACCFVWFNNTAYPSEFYGPTGPEASQAQAFTFLVRDQRLGANVGSAQGPTGLGKYLMRSPTGEVIFGGETMRFWDLRAPWLEPLRGPNGLDLGRLKKDIQPWQERRSAEYMTHAPLGSLNSVGGVATEINAVNYVSPRSWLATSHFVLGFFLFVGHLWHAGRARAAAAGFEKGIDRDLEPVLSMTPLS.

The propeptide occupies 1 to 14; that stretch reads MKTLYSLRRFYPVE. Residue T15 is modified to N-acetylthreonine. T15 carries the phosphothreonine modification. 5 helical membrane-spanning segments follow: residues 69 to 93, 134 to 155, 178 to 200, 255 to 275, and 291 to 312; these read LFEVAHFVPEKPMYEQGLILLPHLA, LLGPETLEESFPFFGYVWKDRN, KALYFGGVYDTWAPGGGDVRKIT, KPFAWARRAFVWSGEAYLSYS, and WFNNTAYPSEFYGPTGPEASQA. E367 is a binding site for [CaMn4O5] cluster. A helical transmembrane segment spans residues 447 to 471; sequence RARAAAAGFEKGIDRDLEPVLSMTP.

Belongs to the PsbB/PsbC family. PsbC subfamily. PSII is composed of 1 copy each of membrane proteins PsbA, PsbB, PsbC, PsbD, PsbE, PsbF, PsbH, PsbI, PsbJ, PsbK, PsbL, PsbM, PsbT, PsbX, PsbY, PsbZ, Psb30/Ycf12, at least 3 peripheral proteins of the oxygen-evolving complex and a large number of cofactors. It forms dimeric complexes. Binds multiple chlorophylls and provides some of the ligands for the Ca-4Mn-5O cluster of the oxygen-evolving complex. It may also provide a ligand for a Cl- that is required for oxygen evolution. PSII binds additional chlorophylls, carotenoids and specific lipids. is required as a cofactor.

The protein resides in the plastid. Its subcellular location is the chloroplast thylakoid membrane. Functionally, one of the components of the core complex of photosystem II (PSII). It binds chlorophyll and helps catalyze the primary light-induced photochemical processes of PSII. PSII is a light-driven water:plastoquinone oxidoreductase, using light energy to abstract electrons from H(2)O, generating O(2) and a proton gradient subsequently used for ATP formation. This Dioscorea elephantipes (Elephant's foot yam) protein is Photosystem II CP43 reaction center protein.